Consider the following 186-residue polypeptide: UPF0340 protein SEQ_1951 (186 aa).

Belongs to the UPF0340 family.

This is UPF0340 protein SEQ_1951 from Streptococcus equi subsp. equi (strain 4047).